A 314-amino-acid polypeptide reads, in one-letter code: tRNA dimethylallyltransferase (314 aa).

9 to 16 contributes to the ATP binding site; the sequence is GPTAVGKT. Position 11–16 (11–16) interacts with substrate; sequence TAVGKT. The interval 34 to 37 is interaction with substrate tRNA; it reads DSMQ.

This sequence belongs to the IPP transferase family. As to quaternary structure, monomer. Mg(2+) serves as cofactor.

The catalysed reaction is adenosine(37) in tRNA + dimethylallyl diphosphate = N(6)-dimethylallyladenosine(37) in tRNA + diphosphate. Functionally, catalyzes the transfer of a dimethylallyl group onto the adenine at position 37 in tRNAs that read codons beginning with uridine, leading to the formation of N6-(dimethylallyl)adenosine (i(6)A). This is tRNA dimethylallyltransferase from Clostridium tetani (strain Massachusetts / E88).